Consider the following 203-residue polypeptide: Outer-membrane lipoprotein carrier protein (203 aa).

Positions 1-21 (MKKLILIGCLMAGMNINVAWA) are cleaved as a signal peptide.

The protein belongs to the LolA family. Monomer.

The protein localises to the periplasm. Its function is as follows. Participates in the translocation of lipoproteins from the inner membrane to the outer membrane. Only forms a complex with a lipoprotein if the residue after the N-terminal Cys is not an aspartate (The Asp acts as a targeting signal to indicate that the lipoprotein should stay in the inner membrane). The sequence is that of Outer-membrane lipoprotein carrier protein from Photorhabdus laumondii subsp. laumondii (strain DSM 15139 / CIP 105565 / TT01) (Photorhabdus luminescens subsp. laumondii).